The sequence spans 210 residues: MRSKPVVIGIAGGSGSGKTSVTNSIYEKFKGHSILMLQQDLYYKNQSHMPFEECLLTNYDHPLAFDNDLMFEHLEQLLRYESIEKPIYDFKLNTRSEETVHVEPKDVIIVEGIFALEDERLRDLMDIKLYVDTDADLRIIRRILRDTKERGRSIDSVIEQYVSVVRPMHNQFIEPTKRYADIIIPEGGQNHVAIDLMVTKIQTILQSRAE.

Position 12–19 (12–19 (GGSGSGKT)) interacts with ATP.

The protein belongs to the uridine kinase family.

The protein resides in the cytoplasm. The enzyme catalyses uridine + ATP = UMP + ADP + H(+). It catalyses the reaction cytidine + ATP = CMP + ADP + H(+). Its pathway is pyrimidine metabolism; CTP biosynthesis via salvage pathway; CTP from cytidine: step 1/3. The protein operates within pyrimidine metabolism; UMP biosynthesis via salvage pathway; UMP from uridine: step 1/1. This Bacillus pumilus (strain SAFR-032) protein is Uridine kinase.